The primary structure comprises 240 residues: Dihydromonapterin reductase (240 aa).

Y152 serves as the catalytic Proton acceptor.

It belongs to the short-chain dehydrogenases/reductases (SDR) family. FolM subfamily.

The catalysed reaction is (6S)-5,6,7,8-tetrahydrofolate + NADP(+) = 7,8-dihydrofolate + NADPH + H(+). It catalyses the reaction 7,8-dihydromonapterin + NADPH + H(+) = 5,6,7,8-tetrahydromonapterin + NADP(+). Catalyzes the reduction of dihydromonapterin to tetrahydromonapterin. Also has lower activity with dihydrofolate. This chain is Dihydromonapterin reductase (folM), found in Enterobacter sp. (strain 638).